A 329-amino-acid chain; its full sequence is UDP-N-acetylenolpyruvoylglucosamine reductase (329 aa).

In terms of domain architecture, FAD-binding PCMH-type spans 28 to 192 (RVGGPADLLC…ARVEVRLHPG (165 aa)). Arg-172 is a catalytic residue. The active-site Proton donor is Ser-221. Glu-291 is an active-site residue. Positions 307-329 (DGHAAAGGGPGAASGGVRPPEAT) are disordered. The segment covering 311-320 (AAGGGPGAAS) has biased composition (gly residues).

Belongs to the MurB family. FAD serves as cofactor.

The protein localises to the cytoplasm. It carries out the reaction UDP-N-acetyl-alpha-D-muramate + NADP(+) = UDP-N-acetyl-3-O-(1-carboxyvinyl)-alpha-D-glucosamine + NADPH + H(+). It functions in the pathway cell wall biogenesis; peptidoglycan biosynthesis. Its function is as follows. Cell wall formation. In Anaeromyxobacter dehalogenans (strain 2CP-1 / ATCC BAA-258), this protein is UDP-N-acetylenolpyruvoylglucosamine reductase.